Here is a 472-residue protein sequence, read N- to C-terminus: Selenium-binding protein 2 (472 aa).

Phosphoserine is present on S467.

The protein belongs to the selenium-binding protein family. Post-translationally, the N-terminus is blocked. In terms of tissue distribution, mainly expressed in liver.

It is found in the nucleus. Its subcellular location is the cytoplasm. It localises to the cytosol. The protein resides in the membrane. In terms of biological role, selenium- and acetaminophen-binding protein which may be involved in the sensing of reactive xenobiotics in the cytoplasm. May be involved in intra-Golgi protein transport. The chain is Selenium-binding protein 2 (Selenbp2) from Mus musculus (Mouse).